A 1017-amino-acid chain; its full sequence is Sodium/potassium-transporting ATPase subunit alpha-2 (1017 aa).

The disordered stretch occupies residues 1 to 31 (MDGREYSPAATTSENGGGRRKQKEKELDELK). Topologically, residues 1–82 (MDGREYSPAA…NALTPPPTTP (82 aa)) are cytoplasmic. The segment at 77 to 79 (PPP) is interaction with phosphoinositide-3 kinase. A helical transmembrane segment spans residues 83 to 103 (EWVKFCRQLFGGFSILLWIGA). Residues 104–126 (ILCFLAYGIQAAMEDEPSNDNLY) lie on the Extracellular side of the membrane. Residues 127 to 147 (LGVVLAAVVIVTGCFSYYQEA) traverse the membrane as a helical segment. Topologically, residues 148 to 283 (KSSKIMDSFK…VGRTPIAMEI (136 aa)) are cytoplasmic. The tract at residues 207 to 228 (KVDNSSLTGESEPQTRSPEFTH) is disordered. Residues 209 to 224 (DNSSLTGESEPQTRSP) show a composition bias toward polar residues. Residues 284–303 (EHFIRLITGVAVFLGLSFFI) traverse the membrane as a helical segment. At 304–315 (LSLILGYTWLEA) the chain is on the extracellular side. A helical membrane pass occupies residues 316-333 (VIFLIGIIVANVPEGLLA). Topologically, residues 334 to 766 (TVTVCLTLTA…EEGRLIFDNL (433 aa)) are cytoplasmic. Asp371 serves as the catalytic 4-aspartylphosphate intermediate. An ATP-binding site is contributed by Lys502. Mg(2+)-binding residues include Asp711 and Asp715. Residues 767–786 (KKSIAYTLTSNIPEITPFLL) traverse the membrane as a helical segment. The Extracellular segment spans residues 787-796 (FIIANIPLPL). The chain crosses the membrane as a helical span at residues 797 to 817 (GTVTILCIDLGTDMVPAISLA). Over 818–837 (YEAAESDIMKRQPRNPRTDK) the chain is Cytoplasmic. The chain crosses the membrane as a helical span at residues 838 to 860 (LVNERLISMAYGQIGMIQALGGF). Over 861–912 (FTYFVILAENGFLPARLLGVRLAWDDRSTNDLEDSYGQEWTYEQRKVVEFTC) the chain is Extracellular. The helical transmembrane segment at 913–932 (HTAFFASIVVVQWADLIICK) threads the bilayer. At 933–945 (TRRNSVFQQGMKN) the chain is on the cytoplasmic side. A Phosphoserine; by PKA modification is found at Ser937. Residues 946-964 (KILIFGLLEETALAAFLSY) form a helical membrane-spanning segment. Topologically, residues 965–979 (CPGMGVALRMYPLKV) are extracellular. The helical transmembrane segment at 980–1000 (TWWFCAFPYSLLIFAYDEVRK) threads the bilayer. Topologically, residues 1001–1017 (LILRRYPGGWVEKETYY) are cytoplasmic.

Belongs to the cation transport ATPase (P-type) (TC 3.A.3) family. Type IIC subfamily. In terms of assembly, the sodium/potassium-transporting ATPase is composed of a catalytic alpha subunit, an auxiliary non-catalytic beta subunit and an additional regulatory subunit.

Its subcellular location is the membrane. It is found in the cell membrane. The enzyme catalyses K(+)(out) + Na(+)(in) + ATP + H2O = K(+)(in) + Na(+)(out) + ADP + phosphate + H(+). Its function is as follows. This is the catalytic component of the active enzyme, which catalyzes the hydrolysis of ATP coupled with the exchange of sodium and potassium ions across the plasma membrane. This action creates the electrochemical gradient of sodium and potassium ions, providing the energy for active transport of various nutrients. The sequence is that of Sodium/potassium-transporting ATPase subunit alpha-2 (ATP1A2) from Gallus gallus (Chicken).